Reading from the N-terminus, the 272-residue chain is MPLTPADVHNVAFSKPPIGKRGYNEDEVDAFLDLVENELTRLIEENADLRQRVAELDQELAAARSGAGASSQATSSIPLYEPEPEPAPAPPQPVYEAPAQPAAPQSEDTAVRAARVLSLAQDTADRLTSTAKAEADKLLSDARAQAEAMVSDARQTAETTVSEARQRADAMLADAQTRSEAQLRQAQEKADALQADAERKHSEIMGTINQQRTVLEGRLEQLRTFEREYRTRLKTYLESQLEELGQRGSAAPVDSSANSDASGFGQFNRGNN.

Disordered stretches follow at residues 1–22 (MPLT…GKRG) and 62–109 (AARS…SEDT). Positions 30–67 (AFLDLVENELTRLIEENADLRQRVAELDQELAAARSGA) form a coiled coil. 2 stretches are compositionally biased toward low complexity: residues 62–76 (AARS…ATSS) and 94–105 (VYEAPAQPAAPQ). Phosphothreonine is present on Thr74. Residues 139–206 (LSDARAQAEA…AERKHSEIMG (68 aa)) adopt a coiled-coil conformation. Positions 243 to 272 (ELGQRGSAAPVDSSANSDASGFGQFNRGNN) are disordered.

The protein belongs to the DivIVA family. Forms homooligomers. Interacts with PbpB and CwsA. Post-translationally, phosphorylated by PknA.

It localises to the cytoplasm. Functionally, important for maintaining cell shape and cell wall integrity by localizing peptidoglycan synthesis to the cell poles. Protects PbpB (PBP3, FtsI) from oxidative stress-induced cleavage. The sequence is that of Cell wall synthesis protein Wag31 (wag31) from Mycolicibacterium smegmatis (strain ATCC 700084 / mc(2)155) (Mycobacterium smegmatis).